The primary structure comprises 172 residues: R-phycocyanin-2 beta chain (172 aa).

Asn72 is modified (N4-methylasparagine). Cys82 lines the (2R,3E)-phycocyanobilin pocket. Cys153 is a binding site for (2R,3E)-phycoerythrobilin.

Belongs to the phycobiliprotein family. Heterodimer of an alpha and a beta chain. Post-translationally, contains two covalently linked bilin chromophores.

The protein resides in the cellular thylakoid membrane. Light-harvesting photosynthetic bile pigment-protein from the phycobiliprotein complex. This is R-phycocyanin-2 beta chain (rpcB) from Synechococcus sp. (strain WH8103).